We begin with the raw amino-acid sequence, 207 residues long: Ribosomal RNA large subunit methyltransferase E (207 aa).

5 residues coordinate S-adenosyl-L-methionine: Gly60, Trp62, Asp80, Asp96, and Asp121. Lys161 acts as the Proton acceptor in catalysis.

This sequence belongs to the class I-like SAM-binding methyltransferase superfamily. RNA methyltransferase RlmE family.

The protein localises to the cytoplasm. The enzyme catalyses uridine(2552) in 23S rRNA + S-adenosyl-L-methionine = 2'-O-methyluridine(2552) in 23S rRNA + S-adenosyl-L-homocysteine + H(+). In terms of biological role, specifically methylates the uridine in position 2552 of 23S rRNA at the 2'-O position of the ribose in the fully assembled 50S ribosomal subunit. The sequence is that of Ribosomal RNA large subunit methyltransferase E from Methylobacillus flagellatus (strain ATCC 51484 / DSM 6875 / VKM B-1610 / KT).